A 197-amino-acid chain; its full sequence is MPIGIPKVPYRLPGGQSQWIDIFNRLALDRIIFLGREVDDEIANAIIASMLYLDSEDPEKDIFLYINSPGGSVSAGLAIYDTMQHVRADVATMCVGLAASMGSFLLTAGAKGKRTSLPHSRIMIHQPLGGAQGQATDIGIQAKEILYTKDRLNQILSERTGQPLERIERDTDRDFFMSAEDAKQYGLIDQVVQHRPV.

S100 functions as the Nucleophile in the catalytic mechanism. Residue H125 is part of the active site.

This sequence belongs to the peptidase S14 family. As to quaternary structure, fourteen ClpP subunits assemble into 2 heptameric rings which stack back to back to give a disk-like structure with a central cavity, resembling the structure of eukaryotic proteasomes.

Its subcellular location is the cytoplasm. It carries out the reaction Hydrolysis of proteins to small peptides in the presence of ATP and magnesium. alpha-casein is the usual test substrate. In the absence of ATP, only oligopeptides shorter than five residues are hydrolyzed (such as succinyl-Leu-Tyr-|-NHMec, and Leu-Tyr-Leu-|-Tyr-Trp, in which cleavage of the -Tyr-|-Leu- and -Tyr-|-Trp bonds also occurs).. In terms of biological role, cleaves peptides in various proteins in a process that requires ATP hydrolysis. Has a chymotrypsin-like activity. Plays a major role in the degradation of misfolded proteins. This is ATP-dependent Clp protease proteolytic subunit 1 from Gloeobacter violaceus (strain ATCC 29082 / PCC 7421).